Consider the following 28-residue polypeptide: DDETTFPCNSGRCACLPEDSHSYTCQSP.

4-hydroxyproline is present on residues Pro-17 and Pro-28.

In terms of processing, contains 3 disulfide bonds. Expressed by the venom duct.

Its subcellular location is the secreted. The sequence is that of Conotoxin Cl9b from Californiconus californicus (California cone).